The primary structure comprises 419 residues: UDP-N-acetylglucosamine 1-carboxyvinyltransferase (419 aa).

Phosphoenolpyruvate is bound at residue 22 to 23; the sequence is KN. Arg91 contributes to the UDP-N-acetyl-alpha-D-glucosamine binding site. Cys115 serves as the catalytic Proton donor. The residue at position 115 (Cys115) is a 2-(S-cysteinyl)pyruvic acid O-phosphothioketal. UDP-N-acetyl-alpha-D-glucosamine is bound by residues 120-124, 160-163, Asp305, and Val327; these read RPVDL and KVSV.

This sequence belongs to the EPSP synthase family. MurA subfamily.

It is found in the cytoplasm. It catalyses the reaction phosphoenolpyruvate + UDP-N-acetyl-alpha-D-glucosamine = UDP-N-acetyl-3-O-(1-carboxyvinyl)-alpha-D-glucosamine + phosphate. The protein operates within cell wall biogenesis; peptidoglycan biosynthesis. Functionally, cell wall formation. Adds enolpyruvyl to UDP-N-acetylglucosamine. The polypeptide is UDP-N-acetylglucosamine 1-carboxyvinyltransferase (Salmonella arizonae (strain ATCC BAA-731 / CDC346-86 / RSK2980)).